A 338-amino-acid polypeptide reads, in one-letter code: Malate dehydrogenase, mitochondrial (338 aa).

The N-terminal 24 residues, 1–24 (MLSALARPVGAALRRSFSTSAQNN), are a transit peptide targeting the mitochondrion. Residues 31 to 37 (GASGGIG) and aspartate 57 each bind NAD(+). The O-linked (GlcNAc) serine glycan is linked to serine 33. Lysine 78 and lysine 91 each carry N6-acetyllysine; alternate. 2 positions are modified to N6-succinyllysine; alternate: lysine 78 and lysine 91. The substrate site is built by arginine 104 and arginine 110. NAD(+) contacts are provided by residues asparagine 117 and 140 to 142 (ISN). Asparagine 142 is a binding site for substrate. Residue lysine 165 is modified to N6-acetyllysine. Arginine 176 lines the substrate pocket. Lysine 185 carries the N6-acetyllysine; alternate modification. Residue lysine 185 is modified to N6-succinyllysine; alternate. The active-site Proton acceptor is the histidine 200. An N6-succinyllysine modification is found at lysine 203. N6-acetyllysine; alternate occurs at positions 215 and 239. 2 positions are modified to N6-succinyllysine; alternate: lysine 215 and lysine 239. Lysine 239 carries the post-translational modification N6-malonyllysine; alternate. Position 246 is a phosphoserine (serine 246). Methionine 251 is a binding site for NAD(+). The residue at position 269 (lysine 269) is an N6-succinyllysine. Residues lysine 296, lysine 301, lysine 307, lysine 314, and lysine 324 each carry the N6-acetyllysine; alternate modification. An N6-succinyllysine; alternate mark is found at lysine 296, lysine 301, lysine 307, lysine 314, and lysine 324. At lysine 307 the chain carries N6-malonyllysine; alternate. The residue at position 326 (serine 326) is a Phosphoserine. N6-acetyllysine; alternate occurs at positions 328, 329, and 335. Lysine 328 is modified (N6-succinyllysine; alternate). An N6-malonyllysine; alternate modification is found at lysine 329. Residue lysine 335 is modified to N6-succinyllysine; alternate.

The protein belongs to the LDH/MDH superfamily. MDH type 1 family. Homodimer. Acetylation is enhanced after treatment either with trichostin A (TCA) or with nicotinamide (NAM) with the appearance of tri- and tetraacetylations. Glucose also increases acetylation. As to expression, expressed in flagella of epididymal sperm.

It localises to the mitochondrion matrix. The enzyme catalyses (S)-malate + NAD(+) = oxaloacetate + NADH + H(+). Enzyme activity is enhanced by acetylation. In Rattus norvegicus (Rat), this protein is Malate dehydrogenase, mitochondrial (Mdh2).